The following is a 306-amino-acid chain: Glutaminase (306 aa).

The substrate site is built by Ser-61, Asn-111, Glu-155, Asn-162, Tyr-186, Tyr-238, and Val-256.

The protein belongs to the glutaminase family. In terms of assembly, homotetramer.

It catalyses the reaction L-glutamine + H2O = L-glutamate + NH4(+). This Pseudomonas entomophila (strain L48) protein is Glutaminase.